The following is a 137-amino-acid chain: Oleosin Ara h 11.0101 (137 aa).

Ala-2 is modified (N-acetylalanine; alternate). 2 helical membrane passes run 27–47 and 55–75; these read AVVAGGSLLILAGLVLAGTVI and LFVIFSPVLVPAVITVALLGL.

Belongs to the oleosin family. As to expression, expressed in seeds (at protein level).

It localises to the lipid droplet. The protein resides in the membrane. Its function is as follows. May have a structural role to stabilize the lipid body during desiccation of the seed by preventing coalescence of the oil. Probably interacts with both lipid and phospholipid moieties of lipid bodies. May also provide recognition signals for specific lipase anchorage in lipolysis during seedling growth. The sequence is that of Oleosin Ara h 11.0101 from Arachis hypogaea (Peanut).